Consider the following 246-residue polypeptide: Phosducin (246 aa).

Residues 1–14 (MEEAASQSLEEDFE) are compositionally biased toward acidic residues. The interval 1–70 (MEEAASQSLE…DKDSKERMSR (70 aa)) is disordered. The Phosducin domain maps to 1–246 (MEEAASQSLE…QTNTEDEDIE (246 aa)). A compositionally biased stretch (basic and acidic residues) spans 58-69 (SRDDKDSKERMS). Ser73 is modified (phosphoserine; by PKA). Residues 111-246 (YGFVYELETG…QTNTEDEDIE (136 aa)) are thioredoxin fold.

This sequence belongs to the phosducin family. As to quaternary structure, interacts with CRX. Forms a complex with the beta and gamma subunits of the GTP-binding protein, transducin. In terms of processing, light-induced changes in cyclic nucleotide levels modulate the phosphorylation of this protein by cAMP kinase.

Its subcellular location is the cytoplasm. The protein resides in the cytosol. It localises to the nucleus. It is found in the cell projection. The protein localises to the cilium. Its subcellular location is the photoreceptor outer segment. The protein resides in the photoreceptor inner segment. Functionally, inhibits the transcriptional activation activity of the cone-rod homeobox CRX. May participate in the regulation of visual phototransduction or in the integration of photoreceptor metabolism. This is Phosducin (Pdc) from Rattus norvegicus (Rat).